The sequence spans 245 residues: 4-hydroxy-tetrahydrodipicolinate reductase (245 aa).

Residues 7–12 (GAKGKV), 75–77 (GTT), and 102–105 (APNF) each bind NAD(+). Residue histidine 132 is the Proton donor/acceptor of the active site. Histidine 133 is a (S)-2,3,4,5-tetrahydrodipicolinate binding site. Lysine 136 functions as the Proton donor in the catalytic mechanism. 142–143 (GT) contacts (S)-2,3,4,5-tetrahydrodipicolinate.

The protein belongs to the DapB family.

The protein localises to the cytoplasm. It carries out the reaction (S)-2,3,4,5-tetrahydrodipicolinate + NAD(+) + H2O = (2S,4S)-4-hydroxy-2,3,4,5-tetrahydrodipicolinate + NADH + H(+). The enzyme catalyses (S)-2,3,4,5-tetrahydrodipicolinate + NADP(+) + H2O = (2S,4S)-4-hydroxy-2,3,4,5-tetrahydrodipicolinate + NADPH + H(+). It functions in the pathway amino-acid biosynthesis; L-lysine biosynthesis via DAP pathway; (S)-tetrahydrodipicolinate from L-aspartate: step 4/4. In terms of biological role, catalyzes the conversion of 4-hydroxy-tetrahydrodipicolinate (HTPA) to tetrahydrodipicolinate. The chain is 4-hydroxy-tetrahydrodipicolinate reductase from Mycobacterium bovis (strain ATCC BAA-935 / AF2122/97).